Consider the following 404-residue polypeptide: 4-hydroxyphenylpyruvate dioxygenase (404 aa).

2 consecutive VOC domains span residues 28–163 and 194–353; these read GYDH…FIQR and YVDH…IFTK. Residues His-197, His-280, and Glu-364 each contribute to the Fe cation site.

This sequence belongs to the 4HPPD family. The cofactor is Fe cation.

It carries out the reaction 3-(4-hydroxyphenyl)pyruvate + O2 = homogentisate + CO2. The protein operates within amino-acid degradation; L-phenylalanine degradation; acetoacetate and fumarate from L-phenylalanine: step 3/6. In terms of biological role, key enzyme in the degradation of tyrosine. The polypeptide is 4-hydroxyphenylpyruvate dioxygenase (TFA) (Tetrahymena thermophila).